We begin with the raw amino-acid sequence, 39 residues long: Potassium channel toxin alpha-KTx 2.5 (39 aa).

3 cysteine pairs are disulfide-bonded: C7–C29, C13–C34, and C17–C36.

This sequence belongs to the short scorpion toxin superfamily. Potassium channel inhibitor family. Alpha-KTx 02 subfamily. As to expression, expressed by the venom gland.

It localises to the secreted. In terms of biological role, potent selective inhibitor of Kv1.1/KCNA1, Kv1.2/KCNA2, Kv1.3/KCNA3 voltage-gated potassium channels. Weak inhibitor of Kv1.6/KCNA6 potassium channel. It also shows a weak interaction with nicotinic acetylcholine receptors (nAChR), suggesting it may weakly inhibit it. This Centruroides limbatus (Bark scorpion) protein is Potassium channel toxin alpha-KTx 2.5.